A 365-amino-acid polypeptide reads, in one-letter code: MFSVLDWKPKIGILGGGQLGWMIVLEGRKYPFTFYVLENDKNAPACRIADRCFSPQDYKEFVDSSDVITFEFEHVYEKALEYAEYSGKLLPRLNSVELKRERYKEKLFYRQHNLPTPRFYVAEDGEEALKILREEFNNVGVIKESKGGYDGKGQYFIFNDVEKYQFLREKKEKMVVEEYVKFDFEASIIIARDKRGVFISYPPTYNYNEKGILVYNYGPYNNQNIVEIARRLSEELDYVGIMGVEVFVVNGKVLINEFAPRVHNTGHYTLDGALISQFEQHLRAIIGMELGPSTILSPSGMVNILGTDKIPVEVLKYGKVYWYSKSEVRKRRKMGHVNVVGNNLEEVKQKIDKIMQLIYTNGLDL.

Residues arginine 102, lysine 143, 148–154, 177–180, glutamate 185, and 256–257 contribute to the ATP site; these read GYDGKGQ, EEYV, and NE. In terms of domain architecture, ATP-grasp spans 106 to 286; that stretch reads KLFYRQHNLP…QFEQHLRAII (181 aa).

This sequence belongs to the PurK/PurT family. In terms of assembly, homodimer.

It carries out the reaction 5-amino-1-(5-phospho-beta-D-ribosyl)imidazole + hydrogencarbonate + ATP = 5-carboxyamino-1-(5-phospho-D-ribosyl)imidazole + ADP + phosphate + 2 H(+). It functions in the pathway purine metabolism; IMP biosynthesis via de novo pathway; 5-amino-1-(5-phospho-D-ribosyl)imidazole-4-carboxylate from 5-amino-1-(5-phospho-D-ribosyl)imidazole (N5-CAIR route): step 1/2. Catalyzes the ATP-dependent conversion of 5-aminoimidazole ribonucleotide (AIR) and HCO(3)(-) to N5-carboxyaminoimidazole ribonucleotide (N5-CAIR). The polypeptide is N5-carboxyaminoimidazole ribonucleotide synthase (Saccharolobus solfataricus (strain ATCC 35092 / DSM 1617 / JCM 11322 / P2) (Sulfolobus solfataricus)).